The following is a 373-amino-acid chain: Phospho-N-acetylmuramoyl-pentapeptide-transferase (373 aa).

10 consecutive transmembrane segments (helical) span residues 34-54 (GALFTSALIVFLFGPRIISSL), 78-98 (TPTMGGLMILAGIVVSSLLWA), 100-120 (LANVYVVATLLVTLGFGAIGF), 141-161 (LGLEFIIAAIAVYFMMNTALS), 181-201 (FMLNLGMFFVLFGAFVIVSAG), 212-232 (GLAIVPVMIAAASFGVIAYLA), 252-272 (LAVVLGAVIGAGLGFLWFNAP), 275-295 (AIFMGDTGSLALGGLIGTVAV), 301-321 (IVMAIIGGLFVLEALSVIIQV), and 350-370 (QVVVRFWIVAVILAMIGLSTL).

This sequence belongs to the glycosyltransferase 4 family. MraY subfamily. Mg(2+) is required as a cofactor.

It localises to the cell inner membrane. It carries out the reaction UDP-N-acetyl-alpha-D-muramoyl-L-alanyl-gamma-D-glutamyl-meso-2,6-diaminopimeloyl-D-alanyl-D-alanine + di-trans,octa-cis-undecaprenyl phosphate = di-trans,octa-cis-undecaprenyl diphospho-N-acetyl-alpha-D-muramoyl-L-alanyl-D-glutamyl-meso-2,6-diaminopimeloyl-D-alanyl-D-alanine + UMP. It participates in cell wall biogenesis; peptidoglycan biosynthesis. Functionally, catalyzes the initial step of the lipid cycle reactions in the biosynthesis of the cell wall peptidoglycan: transfers peptidoglycan precursor phospho-MurNAc-pentapeptide from UDP-MurNAc-pentapeptide onto the lipid carrier undecaprenyl phosphate, yielding undecaprenyl-pyrophosphoryl-MurNAc-pentapeptide, known as lipid I. This Rhizobium rhizogenes (strain K84 / ATCC BAA-868) (Agrobacterium radiobacter) protein is Phospho-N-acetylmuramoyl-pentapeptide-transferase.